The chain runs to 311 residues: Aspartate carbamoyltransferase catalytic subunit (311 aa).

The carbamoyl phosphate site is built by arginine 58 and threonine 59. Position 86 (lysine 86) interacts with L-aspartate. Carbamoyl phosphate contacts are provided by arginine 108, histidine 136, and glutamine 139. Residues arginine 169 and arginine 223 each contribute to the L-aspartate site. The carbamoyl phosphate site is built by glycine 264 and proline 265.

This sequence belongs to the aspartate/ornithine carbamoyltransferase superfamily. ATCase family. Heterododecamer (2C3:3R2) of six catalytic PyrB chains organized as two trimers (C3), and six regulatory PyrI chains organized as three dimers (R2).

It carries out the reaction carbamoyl phosphate + L-aspartate = N-carbamoyl-L-aspartate + phosphate + H(+). The protein operates within pyrimidine metabolism; UMP biosynthesis via de novo pathway; (S)-dihydroorotate from bicarbonate: step 2/3. Functionally, catalyzes the condensation of carbamoyl phosphate and aspartate to form carbamoyl aspartate and inorganic phosphate, the committed step in the de novo pyrimidine nucleotide biosynthesis pathway. The sequence is that of Aspartate carbamoyltransferase catalytic subunit from Pelodictyon phaeoclathratiforme (strain DSM 5477 / BU-1).